Here is a 104-residue protein sequence, read N- to C-terminus: Small ribosomal subunit protein uS10 (104 aa).

The protein belongs to the universal ribosomal protein uS10 family. In terms of assembly, part of the 30S ribosomal subunit.

In terms of biological role, involved in the binding of tRNA to the ribosomes. This Helicobacter pylori (strain J99 / ATCC 700824) (Campylobacter pylori J99) protein is Small ribosomal subunit protein uS10.